Reading from the N-terminus, the 361-residue chain is Peptide chain release factor 1 (361 aa).

Gln235 bears the N5-methylglutamine mark. The segment at 288-307 (AARSADRKDQVGSGDRSERI) is disordered.

It belongs to the prokaryotic/mitochondrial release factor family. Post-translationally, methylated by PrmC. Methylation increases the termination efficiency of RF1.

The protein resides in the cytoplasm. Peptide chain release factor 1 directs the termination of translation in response to the peptide chain termination codons UAG and UAA. The chain is Peptide chain release factor 1 from Nitrobacter hamburgensis (strain DSM 10229 / NCIMB 13809 / X14).